A 249-amino-acid chain; its full sequence is NADH-quinone oxidoreductase subunit C (249 aa).

This sequence belongs to the complex I 30 kDa subunit family. As to quaternary structure, NDH-1 is composed of 14 different subunits. Subunits NuoB, C, D, E, F, and G constitute the peripheral sector of the complex.

Its subcellular location is the cell inner membrane. It catalyses the reaction a quinone + NADH + 5 H(+)(in) = a quinol + NAD(+) + 4 H(+)(out). In terms of biological role, NDH-1 shuttles electrons from NADH, via FMN and iron-sulfur (Fe-S) centers, to quinones in the respiratory chain. The immediate electron acceptor for the enzyme in this species is believed to be ubiquinone. Couples the redox reaction to proton translocation (for every two electrons transferred, four hydrogen ions are translocated across the cytoplasmic membrane), and thus conserves the redox energy in a proton gradient. This is NADH-quinone oxidoreductase subunit C from Stenotrophomonas maltophilia (strain R551-3).